Reading from the N-terminus, the 435-residue chain is Probable E3 ubiquitin-protein ligase makorin-1 (435 aa).

C3H1-type zinc fingers lie at residues 18–45 (WTKHVTCRYFMHGLCKEGDNCRYSHDLT) and 48–75 (KPAAMICKFFQKGNCVFGDRCRFEHCKP). Positions 81 to 109 (LPAPQMLPLPSASLAGPSDPEPSGPTPVP) are disordered. A compositionally biased stretch (pro residues) spans 99-108 (DPEPSGPTPV). Residues 155–182 (QLRKQLCPYAAVGECRYGINCAYLHGDV) form a C3H1-type 3 zinc finger. The tract at residues 183–210 (CYMCGLQVLHPTDNNQRSEHTKACIEAH) is makorin-type Cys-His. The RING-type zinc finger occupies 228 to 282 (CGVCMEVVFEKANPSERRFGILSNCSHCYCLKCIRKWRSAKQFESKIIKSCPECR). A C3H1-type 4 zinc finger spans residues 311–340 (GMGSKPCRYFDEGRGTCPFGSNCFYKHAFP). The segment at 345–369 (EEAQPQRRQTGSNSRNRNSRRTPLW) is disordered.

Weakly expressed in adult brain, heart and kidney.

The enzyme catalyses S-ubiquitinyl-[E2 ubiquitin-conjugating enzyme]-L-cysteine + [acceptor protein]-L-lysine = [E2 ubiquitin-conjugating enzyme]-L-cysteine + N(6)-ubiquitinyl-[acceptor protein]-L-lysine.. Its pathway is protein modification; protein ubiquitination. In terms of biological role, E3 ubiquitin ligase catalyzing the covalent attachment of ubiquitin moieties onto substrate proteins. This is Probable E3 ubiquitin-protein ligase makorin-1 from Seriola quinqueradiata (Five-ray yellowtail).